The primary structure comprises 309 residues: Curved DNA-binding protein (309 aa).

The J domain maps to 5 to 69 (DYYAILGVKP…ERRAEYDQLR (65 aa)).

It localises to the cytoplasm. The protein resides in the nucleoid. DNA-binding protein that preferentially recognizes a curved DNA sequence. It is probably a functional analog of DnaJ; displays overlapping activities with DnaJ, but functions under different conditions, probably acting as a molecular chaperone in an adaptive response to environmental stresses other than heat shock. Lacks autonomous chaperone activity; binds native substrates and targets them for recognition by DnaK. Its activity is inhibited by the binding of CbpM. This is Curved DNA-binding protein from Serratia proteamaculans (strain 568).